A 544-amino-acid chain; its full sequence is Chaperonin GroEL 2 (544 aa).

ATP-binding positions include T29 to P32, D86 to T90, G413, and D495. A disordered region spans residues P525–Y544. Positions A533–Y544 are enriched in gly residues.

It belongs to the chaperonin (HSP60) family. Forms a cylinder of 14 subunits composed of two heptameric rings stacked back-to-back. Interacts with the co-chaperonin GroES.

The protein localises to the cytoplasm. The catalysed reaction is ATP + H2O + a folded polypeptide = ADP + phosphate + an unfolded polypeptide.. In terms of biological role, together with its co-chaperonin GroES, plays an essential role in assisting protein folding. The GroEL-GroES system forms a nano-cage that allows encapsulation of the non-native substrate proteins and provides a physical environment optimized to promote and accelerate protein folding. This is Chaperonin GroEL 2 from Synechococcus sp. (strain JA-3-3Ab) (Cyanobacteria bacterium Yellowstone A-Prime).